Consider the following 736-residue polypeptide: Meiotic expression up-regulated protein 27 (736 aa).

It belongs to the UPF0300 family.

In Schizosaccharomyces pombe (strain 972 / ATCC 24843) (Fission yeast), this protein is Meiotic expression up-regulated protein 27 (meu27).